The primary structure comprises 51 residues: Large ribosomal subunit protein eL39z (51 aa).

Belongs to the eukaryotic ribosomal protein eL39 family.

The chain is Large ribosomal subunit protein eL39z (RPL39A) from Oryza sativa subsp. japonica (Rice).